The chain runs to 403 residues: Probable protein phosphatase 2C 8 (403 aa).

The segment at 42–80 (LGRTASAVAEDDAAKRVRPASDSSSDSSESAKVAPEPTA) is disordered. Low complexity predominate over residues 62–71 (SDSSSDSSES). Positions 90-388 (SHGAVSVIGR…DNISVVVVEL (299 aa)) constitute a PPM-type phosphatase domain. Residues Asp-144, Gly-145, Asp-325, and Asp-379 each coordinate Mn(2+).

The protein belongs to the PP2C family. Requires Mg(2+) as cofactor. Mn(2+) serves as cofactor.

The enzyme catalyses O-phospho-L-seryl-[protein] + H2O = L-seryl-[protein] + phosphate. The catalysed reaction is O-phospho-L-threonyl-[protein] + H2O = L-threonyl-[protein] + phosphate. This Oryza sativa subsp. japonica (Rice) protein is Probable protein phosphatase 2C 8.